A 123-amino-acid polypeptide reads, in one-letter code: Large ribosomal subunit protein uL29 (123 aa).

Residue K19 is modified to N6-acetyllysine. Residue K25 forms a Glycyl lysine isopeptide (Lys-Gly) (interchain with G-Cter in SUMO2) linkage. S29 is subject to Phosphoserine. K43 bears the N6-acetyllysine mark. The interval 100–123 (EKLKTKKQQRKERLYPLRKYAVKA) is disordered.

The protein belongs to the universal ribosomal protein uL29 family. Component of the large ribosomal subunit.

The protein resides in the cytoplasm. In terms of biological role, component of the large ribosomal subunit. The ribosome is a large ribonucleoprotein complex responsible for the synthesis of proteins in the cell. The protein is Large ribosomal subunit protein uL29 (Rpl35) of Mus musculus (Mouse).